The primary structure comprises 249 residues: 3-deoxy-D-manno-octulosonic acid kinase (249 aa).

The active site involves aspartate 175.

This sequence belongs to the protein kinase superfamily. KdkA/RfaP family.

It is found in the cell inner membrane. It carries out the reaction an alpha-Kdo-(2-&gt;6)-lipid IVA + ATP = a 4-O-phospho-alpha-Kdo-(2-&gt;6)-lipid IVA + ADP + H(+). The protein operates within bacterial outer membrane biogenesis; LPS core biosynthesis. Its function is as follows. Catalyzes the ATP-dependent phosphorylation of the 3-deoxy-D-manno-octulosonic acid (Kdo) residue in Kdo-lipid IV(A) at the 4-OH position. The polypeptide is 3-deoxy-D-manno-octulosonic acid kinase (Xanthomonas campestris pv. campestris (strain 8004)).